The chain runs to 240 residues: tRNA pseudouridine synthase A (240 aa).

The active-site Nucleophile is Asp-50. Position 109 (Tyr-109) interacts with substrate.

Belongs to the tRNA pseudouridine synthase TruA family. Homodimer.

The catalysed reaction is uridine(38/39/40) in tRNA = pseudouridine(38/39/40) in tRNA. In terms of biological role, formation of pseudouridine at positions 38, 39 and 40 in the anticodon stem and loop of transfer RNAs. This Campylobacter jejuni subsp. jejuni serotype O:6 (strain 81116 / NCTC 11828) protein is tRNA pseudouridine synthase A.